Reading from the N-terminus, the 326-residue chain is tRNA-dihydrouridine(20/20a) synthase (326 aa).

Residues 11-13 (PML) and glutamine 63 each bind FMN. The active-site Proton donor is cysteine 93. Residues lysine 132, histidine 165, 205–207 (NGG), and 227–228 (GR) each bind FMN.

This sequence belongs to the Dus family. DusA subfamily. FMN serves as cofactor.

The catalysed reaction is 5,6-dihydrouridine(20) in tRNA + NADP(+) = uridine(20) in tRNA + NADPH + H(+). It catalyses the reaction 5,6-dihydrouridine(20) in tRNA + NAD(+) = uridine(20) in tRNA + NADH + H(+). The enzyme catalyses 5,6-dihydrouridine(20a) in tRNA + NADP(+) = uridine(20a) in tRNA + NADPH + H(+). It carries out the reaction 5,6-dihydrouridine(20a) in tRNA + NAD(+) = uridine(20a) in tRNA + NADH + H(+). In terms of biological role, catalyzes the synthesis of 5,6-dihydrouridine (D), a modified base found in the D-loop of most tRNAs, via the reduction of the C5-C6 double bond in target uridines. Specifically modifies U20 and U20a in tRNAs. This is tRNA-dihydrouridine(20/20a) synthase from Vibrio parahaemolyticus serotype O3:K6 (strain RIMD 2210633).